Consider the following 31-residue polypeptide: 23S rRNA methylase leader peptide (31 aa).

In terms of biological role, this peptide is involved in the control mechanism of the synthesis of the erythromycin resistance protein. This Escherichia coli protein is 23S rRNA methylase leader peptide (ermC).